Here is a 277-residue protein sequence, read N- to C-terminus: MDNVVDRHVFYISDGTAITAEVLGHAVMSQFPVTISSITLPFVENESRARAVKDQIDAIYQQTGVRPLVFYSIVLPEIRAIILQSEGFCQDIVQALVAPLQQEMKQDPTPIAHRTHGLNPGNLNKYDARIAAIDYTLAHDDGISLRNLDQAQVILLGVSRCGKTPTSLYLAMQFGIRAANYPFIADDMDNLTLPTSLKPLQHKLFGLTIDPERLAAIREERRENSRYASLRQCRMEVAEVEALYRKNQIPCLNSTNYSVEEIATKILDIMGLNRRMY.

157–164 (GVSRCGKT) provides a ligand contact to ADP.

Belongs to the pyruvate, phosphate/water dikinase regulatory protein family. PSRP subfamily.

The enzyme catalyses [pyruvate, water dikinase] + ADP = [pyruvate, water dikinase]-phosphate + AMP + H(+). The catalysed reaction is [pyruvate, water dikinase]-phosphate + phosphate + H(+) = [pyruvate, water dikinase] + diphosphate. Its function is as follows. Bifunctional serine/threonine kinase and phosphorylase involved in the regulation of the phosphoenolpyruvate synthase (PEPS) by catalyzing its phosphorylation/dephosphorylation. The protein is Phosphoenolpyruvate synthase regulatory protein of Salmonella gallinarum (strain 287/91 / NCTC 13346).